The primary structure comprises 118 residues: Ferredoxin-thioredoxin reductase, catalytic chain (118 aa).

Cysteine 57 lines the [4Fe-4S] cluster pocket. Residue cysteine 59 is the Nucleophile of the active site. Cysteine 59 and cysteine 89 are disulfide-bonded. [4Fe-4S] cluster contacts are provided by cysteine 76, cysteine 78, and cysteine 87.

The protein belongs to the ferredoxin thioredoxin reductase beta subunit family. As to quaternary structure, heterodimer of subunit A (variable subunit) and subunit B (catalytic subunit). Heterodimeric FTR forms a complex with ferredoxin and thioredoxin. It depends on [4Fe-4S] cluster as a cofactor.

The protein localises to the plastid. The protein resides in the chloroplast. It carries out the reaction [thioredoxin]-disulfide + 2 reduced [2Fe-2S]-[ferredoxin] + 2 H(+) = [thioredoxin]-dithiol + 2 oxidized [2Fe-2S]-[ferredoxin]. Functionally, catalytic subunit of the ferredoxin-thioredoxin reductase (FTR), which catalyzes the two-electron reduction of thioredoxins by the electrons provided by reduced ferredoxin. This chain is Ferredoxin-thioredoxin reductase, catalytic chain (ftrB), found in Porphyra purpurea (Red seaweed).